The following is a 429-amino-acid chain: Serine--tRNA ligase (429 aa).

An L-serine-binding site is contributed by 229–231 (TAE). Residue 260–262 (RSE) coordinates ATP. Position 283 (glutamate 283) interacts with L-serine. 347–350 (EISS) provides a ligand contact to ATP. Serine 383 provides a ligand contact to L-serine.

It belongs to the class-II aminoacyl-tRNA synthetase family. Type-1 seryl-tRNA synthetase subfamily. In terms of assembly, homodimer. The tRNA molecule binds across the dimer.

It localises to the cytoplasm. The enzyme catalyses tRNA(Ser) + L-serine + ATP = L-seryl-tRNA(Ser) + AMP + diphosphate + H(+). It catalyses the reaction tRNA(Sec) + L-serine + ATP = L-seryl-tRNA(Sec) + AMP + diphosphate + H(+). Its pathway is aminoacyl-tRNA biosynthesis; selenocysteinyl-tRNA(Sec) biosynthesis; L-seryl-tRNA(Sec) from L-serine and tRNA(Sec): step 1/1. Its function is as follows. Catalyzes the attachment of serine to tRNA(Ser). Is also able to aminoacylate tRNA(Sec) with serine, to form the misacylated tRNA L-seryl-tRNA(Sec), which will be further converted into selenocysteinyl-tRNA(Sec). This is Serine--tRNA ligase from Orientia tsutsugamushi (strain Boryong) (Rickettsia tsutsugamushi).